We begin with the raw amino-acid sequence, 120 residues long: NAD(P)H-quinone oxidoreductase subunit 3, chloroplastic (120 aa).

A run of 3 helical transmembrane segments spans residues 9–29, 64–84, and 88–108; these read IFWA…LISG, MFAL…PWAM, and VLGV…IVGL.

It belongs to the complex I subunit 3 family. In terms of assembly, NDH is composed of at least 16 different subunits, 5 of which are encoded in the nucleus.

The protein localises to the plastid. It localises to the chloroplast thylakoid membrane. The catalysed reaction is a plastoquinone + NADH + (n+1) H(+)(in) = a plastoquinol + NAD(+) + n H(+)(out). The enzyme catalyses a plastoquinone + NADPH + (n+1) H(+)(in) = a plastoquinol + NADP(+) + n H(+)(out). Functionally, NDH shuttles electrons from NAD(P)H:plastoquinone, via FMN and iron-sulfur (Fe-S) centers, to quinones in the photosynthetic chain and possibly in a chloroplast respiratory chain. The immediate electron acceptor for the enzyme in this species is believed to be plastoquinone. Couples the redox reaction to proton translocation, and thus conserves the redox energy in a proton gradient. In Ceratophyllum demersum (Rigid hornwort), this protein is NAD(P)H-quinone oxidoreductase subunit 3, chloroplastic.